The primary structure comprises 231 residues: Large ribosomal subunit protein uL1 (231 aa).

This sequence belongs to the universal ribosomal protein uL1 family. Part of the 50S ribosomal subunit.

In terms of biological role, binds directly to 23S rRNA. The L1 stalk is quite mobile in the ribosome, and is involved in E site tRNA release. Its function is as follows. Protein L1 is also a translational repressor protein, it controls the translation of the L11 operon by binding to its mRNA. The polypeptide is Large ribosomal subunit protein uL1 (Nitrosomonas eutropha (strain DSM 101675 / C91 / Nm57)).